The chain runs to 406 residues: Phosphopentomutase (406 aa).

Residues Asp-10, Asp-305, His-310, Asp-346, His-347, and His-358 each contribute to the Mn(2+) site.

The protein belongs to the phosphopentomutase family. Mn(2+) serves as cofactor.

Its subcellular location is the cytoplasm. The catalysed reaction is 2-deoxy-alpha-D-ribose 1-phosphate = 2-deoxy-D-ribose 5-phosphate. It catalyses the reaction alpha-D-ribose 1-phosphate = D-ribose 5-phosphate. Its pathway is carbohydrate degradation; 2-deoxy-D-ribose 1-phosphate degradation; D-glyceraldehyde 3-phosphate and acetaldehyde from 2-deoxy-alpha-D-ribose 1-phosphate: step 1/2. Functionally, isomerase that catalyzes the conversion of deoxy-ribose 1-phosphate (dRib-1-P) and ribose 1-phosphate (Rib-1-P) to deoxy-ribose 5-phosphate (dRib-5-P) and ribose 5-phosphate (Rib-5-P), respectively. The polypeptide is Phosphopentomutase (Rhizobium rhizogenes (strain K84 / ATCC BAA-868) (Agrobacterium radiobacter)).